The sequence spans 217 residues: MKFNNMIDHTLLKAEATTKDVDKLIAEAKEYGFKSVCVNSSWVKYVKEKLKGSDVLVCAVVGFPLGAMSMQAKVFEAKLAIDHGADEIDMVINIGRFRDDQHDYVLNEIKKIKEVMGNKVLKVIIETALLDKKGIKDATNIVLQSGAEFIKTSTGFSYSGAQVEDIEVFKEILGDKVAIKASGGIKNLNDMKNLYKAGARRFGTSAAVAIVKEQGKQ.

Asp-89 acts as the Proton donor/acceptor in catalysis. The active-site Schiff-base intermediate with acetaldehyde is the Lys-151. The active-site Proton donor/acceptor is the Lys-180.

It belongs to the DeoC/FbaB aldolase family. DeoC type 1 subfamily.

The protein localises to the cytoplasm. It carries out the reaction 2-deoxy-D-ribose 5-phosphate = D-glyceraldehyde 3-phosphate + acetaldehyde. It participates in carbohydrate degradation; 2-deoxy-D-ribose 1-phosphate degradation; D-glyceraldehyde 3-phosphate and acetaldehyde from 2-deoxy-alpha-D-ribose 1-phosphate: step 2/2. Functionally, catalyzes a reversible aldol reaction between acetaldehyde and D-glyceraldehyde 3-phosphate to generate 2-deoxy-D-ribose 5-phosphate. The sequence is that of Deoxyribose-phosphate aldolase from Mycoplasma mobile (strain ATCC 43663 / 163K / NCTC 11711) (Mesomycoplasma mobile).